The sequence spans 735 residues: Two pore calcium channel protein 1B (735 aa).

Over Met1–Asp76 the chain is Cytoplasmic. A helical membrane pass occupies residues Phe77–Trp97. Over Cys98–Ser125 the chain is Extracellular. A helical membrane pass occupies residues Leu126 to Tyr146. Topologically, residues Glu147 to Lys161 are cytoplasmic. Residues Val162–Phe182 traverse the membrane as a helical segment. Residue Tyr183 is a topological domain, extracellular. A helical; Voltage-sensor membrane pass occupies residues Tyr184 to Ile202. Over Arg203–Ser208 the chain is Cytoplasmic. Residues Phe209–Phe229 form a helical membrane-spanning segment. The Extracellular segment spans residues Leu230–Lys248. Positions Thr249–Val263 form an intramembrane region, pore-forming. Over Leu264–Leu286 the chain is Extracellular. Residues Phe287–Val307 traverse the membrane as a helical segment. At Tyr308 to Arg431 the chain is on the cytoplasmic side. 2 EF-hand domains span residues Leu325–Tyr360 and Ile366–Arg401. The chain crosses the membrane as a helical span at residues Gly432 to Ile452. Residues Glu453–Val470 are Extracellular-facing. The N-linked (GlcNAc...) asparagine glycan is linked to Asn460. Residues Glu471–Phe491 form a helical membrane-spanning segment. Topologically, residues Glu492–Arg501 are cytoplasmic. A helical transmembrane segment spans residues Phe502–Asp522. At Asp523 to Glu531 the chain is on the extracellular side. The helical; Voltage-sensor transmembrane segment at Trp532–Met549 threads the bilayer. Topologically, residues His550–Thr560 are cytoplasmic. The helical transmembrane segment at Phe561–Phe581 threads the bilayer. Residues Tyr582–Asp618 are Extracellular-facing. Positions Tyr619 to Gly633 form an intramembrane region, pore-forming. Topologically, residues Asn634–Tyr654 are extracellular. A helical transmembrane segment spans residues Phe655–Leu675. Residues Glu676–Pro735 lie on the Cytoplasmic side of the membrane.

It belongs to the calcium channel alpha-1 subunit (TC 1.A.1.11) family. Two pore calcium channel subfamily. Homodimer.

It is found in the membrane. With respect to regulation, inhibited by Al(3+), La(3+) and Gd(3+). Up-regulated by H(2)O(2), cryptogein, salicylic acid (SA) and cold shock. In terms of biological role, functions as a voltage-gated inward-rectifying Ca(2+) channel (VDCC) across the plasma membrane that mediates sucrose-induced Ca(2+) influx in autotrophically grown leaf cells. Acts as the major ROS-responsive Ca(2+) channel and is the possible target of Al-dependent inhibition. Plays a regulatory role in defense responses. The protein is Two pore calcium channel protein 1B (TPC1B) of Nicotiana tabacum (Common tobacco).